The primary structure comprises 340 residues: DNA-directed RNA polymerase subunit alpha (340 aa).

Positions 1 to 235 (MYRNWTELIK…DQLNPFINFD (235 aa)) are alpha N-terminal domain (alpha-NTD). Positions 251-340 (WNPNLFRKVD…LSKQFEEENF (90 aa)) are alpha C-terminal domain (alpha-CTD).

The protein belongs to the RNA polymerase alpha chain family. As to quaternary structure, homodimer. The RNAP catalytic core consists of 2 alpha, 1 beta, 1 beta' and 1 omega subunit. When a sigma factor is associated with the core the holoenzyme is formed, which can initiate transcription.

The enzyme catalyses RNA(n) + a ribonucleoside 5'-triphosphate = RNA(n+1) + diphosphate. DNA-dependent RNA polymerase catalyzes the transcription of DNA into RNA using the four ribonucleoside triphosphates as substrates. This is DNA-directed RNA polymerase subunit alpha from Magnetococcus marinus (strain ATCC BAA-1437 / JCM 17883 / MC-1).